The following is a 215-amino-acid chain: Large ribosomal subunit protein bL25 (215 aa).

The segment at 190 to 215 (VLTDAEEETDETPEEPEAIRQKGDEE) is disordered. Over residues 193–205 (DAEEETDETPEEP) the composition is skewed to acidic residues. The span at 206-215 (EAIRQKGDEE) shows a compositional bias: basic and acidic residues.

This sequence belongs to the bacterial ribosomal protein bL25 family. CTC subfamily. Part of the 50S ribosomal subunit; part of the 5S rRNA/L5/L18/L25 subcomplex. Contacts the 5S rRNA. Binds to the 5S rRNA independently of L5 and L18.

Functionally, this is one of the proteins that binds to the 5S RNA in the ribosome where it forms part of the central protuberance. The protein is Large ribosomal subunit protein bL25 of Maricaulis maris (strain MCS10) (Caulobacter maris).